The following is a 484-amino-acid chain: Crt homolog 2 (484 aa).

Residues 1-57 lie on the Cytoplasmic side of the membrane; it reads MSEEKLPLLSPLNENDIENDYKDENLKSDLDKLSNVKKQSIIQRFKDYLKNSISKQT. The chain crosses the membrane as a helical span at residues 58-78; that stretch reads ATVLVYVVLYILSGVINSLLL. The Vacuolar segment spans residues 79-94; that stretch reads KKVMNVFTNYGFFLNQ. A helical membrane pass occupies residues 95–115; the sequence is LTNYGYVPIFGAIVLYKILFT. The Cytoplasmic segment spans residues 116–128; the sequence is NDIPKDTRSFPQW. The helical transmembrane segment at 129-149 threads the bilayer; it reads KFVIMGALDAVTGYFVVIGGI. The Vacuolar portion of the chain corresponds to 150–154; sequence KTTGP. A helical membrane pass occupies residues 155 to 175; sequence LQQLLNQSVIPFTMLLSFIFL. The Cytoplasmic portion of the chain corresponds to 176 to 178; the sequence is KER. A helical membrane pass occupies residues 179-199; that stretch reads YSLIQLGGALIIIGGVVVSLI. Topologically, residues 200-210 are vacuolar; sequence PSLTGGNTSGN. A glycan (N-linked (GlcNAc...) asparagine) is linked at asparagine 206. A helical membrane pass occupies residues 211–231; sequence MLFYNFFYLISMIPYAFSNVY. Residues 232–244 lie on the Cytoplasmic side of the membrane; it reads KAIGFSTVEDMDV. Residues 245 to 265 form a helical membrane-spanning segment; that stretch reads WYLQYFDALYQSLVGTVLFPI. The Vacuolar portion of the chain corresponds to 266 to 328; sequence NNWLPPPSDM…LGCDNCHGAW (63 aa). N-linked (GlcNAc...) asparagine glycosylation occurs at asparagine 302. A helical transmembrane segment spans residues 329-349; sequence VVVLIYMAVNVLYNVFILLVL. The Cytoplasmic portion of the chain corresponds to 350-355; the sequence is KHAGAT. A helical transmembrane segment spans residues 356–378; it reads VFSIANTLRLPLTNIAFSFKFIM. The Vacuolar segment spans residues 379 to 382; the sequence is GSDS. Residues 383–403 traverse the membrane as a helical segment; it reads NPFSGLSVAGLCIILLGLGGY. Over 404-484 the chain is Cytoplasmic; it reads RVGSMIKQKK…RNQNSIYGDQ (81 aa).

This sequence belongs to the CRT-like transporter family.

The protein resides in the vacuole membrane. In terms of biological role, nutrient transporter. Involved in maintaining the osmotic homeostasis of the digestive vacuole. The sequence is that of Crt homolog 2 (crtp2) from Dictyostelium discoideum (Social amoeba).